The following is a 474-amino-acid chain: Lipoprotein lipase (474 aa).

The first 27 residues, 1 to 27 (MESKALLLVALGVWLQSLTAFRGGVAA), serve as a signal peptide directing secretion. The interval 32–53 (RDFSDIESKFALRTPEDTAEDT) is interaction with GPIHBP1. A disulfide bond links Cys-54 and Cys-67. N-linked (GlcNAc...) asparagine glycosylation is present at Asn-70. The residue at position 121 (Tyr-121) is a 3'-nitrotyrosine. Ser-159 serves as the catalytic Nucleophile. Catalysis depends on Asp-183, which acts as the Charge relay system. At Tyr-191 the chain carries 3'-nitrotyrosine. Ca(2+) is bound by residues Ala-194, Arg-197, Ser-199, and Asp-202. An intrachain disulfide couples Cys-243 to Cys-266. An essential for determining substrate specificity region spans residues 243 to 266 (CNIGEAIRVIAEKGLGDVDQLVKC). The Charge relay system role is filled by His-268. Disulfide bonds link Cys-291–Cys-310 and Cys-302–Cys-305. In terms of domain architecture, PLAT spans 341-464 (FHYQVKIHFS…KGKDAAVFVK (124 aa)). Tyr-343 is modified (3'-nitrotyrosine). N-linked (GlcNAc...) asparagine glycosylation occurs at Asn-386. An important for interaction with lipoprotein particles region spans residues 417–421 (WSDWW). An important for heparin binding region spans residues 430-434 (KIRVK). The tract at residues 443-467 (IFCAREKVSHLQKGKDAAVFVKCHD) is interaction with GPIHBP1. Cys-445 and Cys-465 form a disulfide bridge.

This sequence belongs to the AB hydrolase superfamily. Lipase family. Homodimer. Interacts with GPIHBP1 with 1:1 stoichiometry. Interacts with APOC2; the interaction activates LPL activity in the presence of lipids. Interaction with heparan sulfate proteoglycans is required to protect LPL against loss of activity. Associates with lipoprotein particles in blood plasma. Interacts with LMF1 and SEL1L; interaction with SEL1L is required to prevent aggregation of newly synthesized LPL in the endoplasmic reticulum (ER), and for normal export of LPL from the ER to the extracellular space. Interacts with SORL1; SORL1 acts as a sorting receptor, promoting LPL localization to endosomes and later to lysosomes, leading to degradation of newly synthesized LPL. In terms of processing, tyrosine nitration after lipopolysaccharide (LPS) challenge down-regulates the lipase activity.

Its subcellular location is the cell membrane. It is found in the secreted. The protein resides in the extracellular space. The protein localises to the extracellular matrix. It carries out the reaction a triacylglycerol + H2O = a diacylglycerol + a fatty acid + H(+). It catalyses the reaction a 1,2-diacyl-sn-glycero-3-phosphocholine + H2O = a 2-acyl-sn-glycero-3-phosphocholine + a fatty acid + H(+). The catalysed reaction is 1,2,3-tri-(9Z-octadecenoyl)-glycerol + H2O = di-(9Z)-octadecenoylglycerol + (9Z)-octadecenoate + H(+). The enzyme catalyses 1,2-di-(9Z-octadecenoyl)-sn-glycero-3-phosphocholine + H2O = (9Z-octadecenoyl)-sn-glycero-3-phosphocholine + (9Z)-octadecenoate + H(+). It carries out the reaction 1,2,3-tributanoylglycerol + H2O = dibutanoylglycerol + butanoate + H(+). It catalyses the reaction 1,2-dihexadecanoyl-sn-glycero-3-phosphocholine + H2O = hexadecanoyl-sn-glycero-3-phosphocholine + hexadecanoate + H(+). With respect to regulation, the apolipoprotein APOC2 acts as a coactivator of LPL activity. Ca(2+) binding promotes protein stability and formation of the active homodimer. Interaction with GPIHBP1 protects LPL against inactivation by ANGPTL4. Its function is as follows. Key enzyme in triglyceride metabolism. Catalyzes the hydrolysis of triglycerides from circulating chylomicrons and very low density lipoproteins (VLDL), and thereby plays an important role in lipid clearance from the blood stream, lipid utilization and storage. Although it has both phospholipase and triglyceride lipase activities it is primarily a triglyceride lipase with low but detectable phospholipase activity. Mediates margination of triglyceride-rich lipoprotein particles in capillaries. Recruited to its site of action on the luminal surface of vascular endothelium by binding to GPIHBP1 and cell surface heparan sulfate proteoglycans. This chain is Lipoprotein lipase (Lpl), found in Rattus norvegicus (Rat).